The sequence spans 193 residues: Large ribosomal subunit protein uL5 (193 aa).

It belongs to the universal ribosomal protein uL5 family. Part of the 50S ribosomal subunit; part of the 5S rRNA/L5/L18/L25 subcomplex. Contacts the 5S rRNA and the P site tRNA. Forms a bridge to the 30S subunit in the 70S ribosome.

This is one of the proteins that bind and probably mediate the attachment of the 5S RNA into the large ribosomal subunit, where it forms part of the central protuberance. In the 70S ribosome it contacts protein S13 of the 30S subunit (bridge B1b), connecting the 2 subunits; this bridge is implicated in subunit movement. Contacts the P site tRNA; the 5S rRNA and some of its associated proteins might help stabilize positioning of ribosome-bound tRNAs. This Rhizorhabdus wittichii (strain DSM 6014 / CCUG 31198 / JCM 15750 / NBRC 105917 / EY 4224 / RW1) (Sphingomonas wittichii) protein is Large ribosomal subunit protein uL5.